The sequence spans 718 residues: Methionine--tRNA ligase (718 aa).

The 'HIGH' region motif lies at 27–37; it reads PYANGQIHIGH. Residues Cys-158, Cys-161, Cys-171, and Cys-174 each coordinate Zn(2+). Residues 348-352 carry the 'KMSKS' region motif; sequence KMSKS. Lys-351 is an ATP binding site. The tRNA-binding domain maps to 612–718; the sequence is DFAKIDLRIA…SGAKPGMRVK (107 aa).

It belongs to the class-I aminoacyl-tRNA synthetase family. MetG type 1 subfamily. Homodimer. Zn(2+) is required as a cofactor.

It localises to the cytoplasm. It carries out the reaction tRNA(Met) + L-methionine + ATP = L-methionyl-tRNA(Met) + AMP + diphosphate. Is required not only for elongation of protein synthesis but also for the initiation of all mRNA translation through initiator tRNA(fMet) aminoacylation. The polypeptide is Methionine--tRNA ligase (Burkholderia cenocepacia (strain ATCC BAA-245 / DSM 16553 / LMG 16656 / NCTC 13227 / J2315 / CF5610) (Burkholderia cepacia (strain J2315))).